Consider the following 173-residue polypeptide: Small ribosomal subunit protein mS25 (173 aa).

It belongs to the mitochondrion-specific ribosomal protein mS25 family. As to quaternary structure, component of the mitochondrial small ribosomal subunit (mt-SSU). Mature mammalian 55S mitochondrial ribosomes consist of a small (28S) and a large (39S) subunit. The 28S small subunit contains a 12S ribosomal RNA (12S mt-rRNA) and 30 different proteins. The 39S large subunit contains a 16S rRNA (16S mt-rRNA), a copy of mitochondrial valine transfer RNA (mt-tRNA(Val)), which plays an integral structural role, and 52 different proteins.

Its subcellular location is the mitochondrion. In Homo sapiens (Human), this protein is Small ribosomal subunit protein mS25 (MRPS25).